Consider the following 527-residue polypeptide: Probable malate:quinone oxidoreductase (527 aa).

Belongs to the MQO family. Requires FAD as cofactor.

The enzyme catalyses (S)-malate + a quinone = a quinol + oxaloacetate. It participates in carbohydrate metabolism; tricarboxylic acid cycle; oxaloacetate from (S)-malate (quinone route): step 1/1. This is Probable malate:quinone oxidoreductase from Pectobacterium atrosepticum (strain SCRI 1043 / ATCC BAA-672) (Erwinia carotovora subsp. atroseptica).